The chain runs to 306 residues: D-alanine--D-alanine ligase B (306 aa).

Active-site residues include Glu-15 and Ser-150. An ATP-grasp domain is found at 101-303; that stretch reads KLLWQGAGLP…FSQLVVRILE (203 aa). An ATP-binding site is contributed by 134–189; it reads ISALGLPVIVKPSREGSSVGMSKVVAENALQDALRLAFQHDEEVLIEKWLSGPEFT. Mg(2+)-binding residues include Asp-257, Glu-270, and Asn-272. Ser-281 is a catalytic residue.

The protein belongs to the D-alanine--D-alanine ligase family. Monomer. The cofactor is Mg(2+). It depends on Mn(2+) as a cofactor.

It localises to the cytoplasm. It carries out the reaction 2 D-alanine + ATP = D-alanyl-D-alanine + ADP + phosphate + H(+). Its pathway is cell wall biogenesis; peptidoglycan biosynthesis. Cell wall formation. The protein is D-alanine--D-alanine ligase B (ddlB) of Escherichia coli (strain K12).